A 157-amino-acid chain; its full sequence is Endoribonuclease YbeY (157 aa).

Histidine 111, histidine 115, and histidine 121 together coordinate Zn(2+). A disordered region spans residues 136–157 (ELLAELGHPDPYADDETDSITH). The span at 147 to 157 (YADDETDSITH) shows a compositional bias: acidic residues.

Belongs to the endoribonuclease YbeY family. Zn(2+) is required as a cofactor.

It is found in the cytoplasm. In terms of biological role, single strand-specific metallo-endoribonuclease involved in late-stage 70S ribosome quality control and in maturation of the 3' terminus of the 16S rRNA. This Pseudomonas putida (strain ATCC 700007 / DSM 6899 / JCM 31910 / BCRC 17059 / LMG 24140 / F1) protein is Endoribonuclease YbeY.